Reading from the N-terminus, the 547-residue chain is Chaperonin GroEL (547 aa).

Residues 30-33 (TLGP), Lys51, 87-91 (DGTTT), Gly415, 479-481 (NAA), and Asp495 each bind ATP.

The protein belongs to the chaperonin (HSP60) family. As to quaternary structure, forms a cylinder of 14 subunits composed of two heptameric rings stacked back-to-back. Interacts with the co-chaperonin GroES.

It is found in the cytoplasm. The enzyme catalyses ATP + H2O + a folded polypeptide = ADP + phosphate + an unfolded polypeptide.. Together with its co-chaperonin GroES, plays an essential role in assisting protein folding. The GroEL-GroES system forms a nano-cage that allows encapsulation of the non-native substrate proteins and provides a physical environment optimized to promote and accelerate protein folding. The protein is Chaperonin GroEL of Pseudomonas putida (strain GB-1).